Here is a 464-residue protein sequence, read N- to C-terminus: Protein FAM90A18 (464 aa).

Disordered stretches follow at residues M1–L42, P70–D387, and H415–P437. Basic and acidic residues-rich tracts occupy residues G74–V89 and N97–R114. A compositionally biased stretch (low complexity) spans L180–L197.

This sequence belongs to the FAM90 family.

The polypeptide is Protein FAM90A18 (Homo sapiens (Human)).